The chain runs to 214 residues: MEYNVKTFKEMLIEENSRHNLVSRKSLPVELEKHIEDSRSLLNFMDLKGSRVVDIGSGAGFPGLVLAIYCPEGEFLLLESDLKKTEFLQAVINRCGLKNCQVLRKRIEEVGRSELRNSFDFCSCRALAMMNIVLEYGLPLLRLGGKLLLWKGKNYSREIEQAANALDILGGKVVDIFTYSLMAERDRAIVVVEKERDTPAKYPRRVGIPAKRPL.

S-adenosyl-L-methionine contacts are provided by residues G56, F61, 107–108 (IE), and R125.

This sequence belongs to the methyltransferase superfamily. RNA methyltransferase RsmG family.

It is found in the cytoplasm. Its function is as follows. Specifically methylates the N7 position of a guanine in 16S rRNA. In Syntrophomonas wolfei subsp. wolfei (strain DSM 2245B / Goettingen), this protein is Ribosomal RNA small subunit methyltransferase G.